The following is a 140-amino-acid chain: Cysteine protease inhibitor 6 (140 aa).

A disulfide bridge links Cys-103 with Cys-109.

This sequence belongs to the protease inhibitor I3 (leguminous Kunitz-type inhibitor) family.

The protein localises to the vacuole. Functionally, inhibitor of cysteine proteases. May protect the plant by inhibiting proteases of invading organisms. The polypeptide is Cysteine protease inhibitor 6 (Solanum tuberosum (Potato)).